We begin with the raw amino-acid sequence, 108 residues long: Pyrimidine/purine nucleoside phosphorylase (108 aa).

It belongs to the nucleoside phosphorylase PpnP family.

The catalysed reaction is a purine D-ribonucleoside + phosphate = a purine nucleobase + alpha-D-ribose 1-phosphate. It catalyses the reaction adenosine + phosphate = alpha-D-ribose 1-phosphate + adenine. The enzyme catalyses cytidine + phosphate = cytosine + alpha-D-ribose 1-phosphate. It carries out the reaction guanosine + phosphate = alpha-D-ribose 1-phosphate + guanine. The catalysed reaction is inosine + phosphate = alpha-D-ribose 1-phosphate + hypoxanthine. It catalyses the reaction thymidine + phosphate = 2-deoxy-alpha-D-ribose 1-phosphate + thymine. The enzyme catalyses uridine + phosphate = alpha-D-ribose 1-phosphate + uracil. It carries out the reaction xanthosine + phosphate = alpha-D-ribose 1-phosphate + xanthine. In terms of biological role, catalyzes the phosphorolysis of diverse nucleosides, yielding D-ribose 1-phosphate and the respective free bases. Can use uridine, adenosine, guanosine, cytidine, thymidine, inosine and xanthosine as substrates. Also catalyzes the reverse reactions. This Polaromonas sp. (strain JS666 / ATCC BAA-500) protein is Pyrimidine/purine nucleoside phosphorylase.